The following is a 34-amino-acid chain: Corticostatin-2 (34 aa).

Cystine bridges form between Cys3–Cys32, Cys5–Cys21, and Cys11–Cys31.

It belongs to the alpha-defensin family.

It localises to the secreted. Functionally, microbicidal activity and inhibits corticotropin (ACTH) stimulated corticosterone production. This Oryctolagus cuniculus (Rabbit) protein is Corticostatin-2.